The chain runs to 398 residues: 4-hydroxy-3-methylbut-2-enyl diphosphate reductase (398 aa).

Cys66 contributes to the [4Fe-4S] cluster binding site. A (2E)-4-hydroxy-3-methylbut-2-enyl diphosphate-binding site is contributed by His96. His96 is a dimethylallyl diphosphate binding site. Residue His96 coordinates isopentenyl diphosphate. Cys157 lines the [4Fe-4S] cluster pocket. His185 lines the (2E)-4-hydroxy-3-methylbut-2-enyl diphosphate pocket. Residue His185 participates in dimethylallyl diphosphate binding. His185 lines the isopentenyl diphosphate pocket. Glu187 acts as the Proton donor in catalysis. (2E)-4-hydroxy-3-methylbut-2-enyl diphosphate is bound at residue Thr250. Position 288 (Cys288) interacts with [4Fe-4S] cluster. Residues Ser317, Ser318, Asn319, and Ser380 each coordinate (2E)-4-hydroxy-3-methylbut-2-enyl diphosphate. The dimethylallyl diphosphate site is built by Ser317, Ser318, Asn319, and Ser380. Residues Ser317, Ser318, Asn319, and Ser380 each coordinate isopentenyl diphosphate.

It belongs to the IspH family. [4Fe-4S] cluster is required as a cofactor.

It carries out the reaction isopentenyl diphosphate + 2 oxidized [2Fe-2S]-[ferredoxin] + H2O = (2E)-4-hydroxy-3-methylbut-2-enyl diphosphate + 2 reduced [2Fe-2S]-[ferredoxin] + 2 H(+). It catalyses the reaction dimethylallyl diphosphate + 2 oxidized [2Fe-2S]-[ferredoxin] + H2O = (2E)-4-hydroxy-3-methylbut-2-enyl diphosphate + 2 reduced [2Fe-2S]-[ferredoxin] + 2 H(+). It functions in the pathway isoprenoid biosynthesis; dimethylallyl diphosphate biosynthesis; dimethylallyl diphosphate from (2E)-4-hydroxy-3-methylbutenyl diphosphate: step 1/1. The protein operates within isoprenoid biosynthesis; isopentenyl diphosphate biosynthesis via DXP pathway; isopentenyl diphosphate from 1-deoxy-D-xylulose 5-phosphate: step 6/6. Its function is as follows. Catalyzes the conversion of 1-hydroxy-2-methyl-2-(E)-butenyl 4-diphosphate (HMBPP) into a mixture of isopentenyl diphosphate (IPP) and dimethylallyl diphosphate (DMAPP). Acts in the terminal step of the DOXP/MEP pathway for isoprenoid precursor biosynthesis. The chain is 4-hydroxy-3-methylbut-2-enyl diphosphate reductase from Prochlorococcus marinus (strain AS9601).